A 445-amino-acid polypeptide reads, in one-letter code: Probable glycine dehydrogenase (decarboxylating) subunit 1 (445 aa).

The protein belongs to the GcvP family. N-terminal subunit subfamily. In terms of assembly, the glycine cleavage system is composed of four proteins: P, T, L and H. In this organism, the P 'protein' is a heterodimer of two subunits.

It carries out the reaction N(6)-[(R)-lipoyl]-L-lysyl-[glycine-cleavage complex H protein] + glycine + H(+) = N(6)-[(R)-S(8)-aminomethyldihydrolipoyl]-L-lysyl-[glycine-cleavage complex H protein] + CO2. The glycine cleavage system catalyzes the degradation of glycine. The P protein binds the alpha-amino group of glycine through its pyridoxal phosphate cofactor; CO(2) is released and the remaining methylamine moiety is then transferred to the lipoamide cofactor of the H protein. The polypeptide is Probable glycine dehydrogenase (decarboxylating) subunit 1 (Anaeromyxobacter sp. (strain Fw109-5)).